Reading from the N-terminus, the 208-residue chain is Outer-membrane lipoprotein carrier protein (208 aa).

An N-terminal signal peptide occupies residues 1–22 (MKKIFAIAALSLPLFSHFPAFA).

Belongs to the LolA family. In terms of assembly, monomer.

Its subcellular location is the periplasm. Participates in the translocation of lipoproteins from the inner membrane to the outer membrane. Only forms a complex with a lipoprotein if the residue after the N-terminal Cys is not an aspartate (The Asp acts as a targeting signal to indicate that the lipoprotein should stay in the inner membrane). The sequence is that of Outer-membrane lipoprotein carrier protein from Shewanella halifaxensis (strain HAW-EB4).